Reading from the N-terminus, the 1035-residue chain is Protein hir-1 (1035 aa).

WD repeat units follow at residues 15 to 54 (QKDF…NSHD), 68 to 107 (HHLG…PSHT), 129 to 168 (GHDN…KLKT), 171 to 210 (VHQS…PNAT), 232 to 275 (PLTT…SEIN), 299 to 338 (DENS…PVLI), and 342 to 383 (IASK…WVAK). The tract at residues 393 to 479 (KYGGSRKGMG…PEEESADKTA (87 aa)) is disordered. Residues 408–425 (DGLHLENHSKEKELRGAE) show a composition bias toward basic and acidic residues.

The protein belongs to the WD repeat HIR1 family.

Its subcellular location is the nucleus. Required for replication-independent chromatin assembly and for the periodic repression of histone gene transcription during the cell cycle. The sequence is that of Protein hir-1 (hir-1) from Neurospora crassa (strain ATCC 24698 / 74-OR23-1A / CBS 708.71 / DSM 1257 / FGSC 987).